The following is a 464-amino-acid chain: Siroheme synthase (464 aa).

The interval 1–203 (MEFLPLFHNL…GQGAEAERML (203 aa)) is precorrin-2 dehydrogenase /sirohydrochlorin ferrochelatase. Residues 22-23 (EI) and 43-44 (PE) contribute to the NAD(+) site. Position 128 is a phosphoserine (serine 128). The interval 216-464 (GEVYLVGAGP…AWFEGAQATL (249 aa)) is uroporphyrinogen-III C-methyltransferase. Proline 225 is a binding site for S-adenosyl-L-methionine. The Proton acceptor role is filled by aspartate 248. The active-site Proton donor is lysine 270. S-adenosyl-L-methionine contacts are provided by residues 301–303 (GGD), isoleucine 306, 331–332 (TA), methionine 383, and glycine 412.

This sequence in the N-terminal section; belongs to the precorrin-2 dehydrogenase / sirohydrochlorin ferrochelatase family. It in the C-terminal section; belongs to the precorrin methyltransferase family.

It catalyses the reaction uroporphyrinogen III + 2 S-adenosyl-L-methionine = precorrin-2 + 2 S-adenosyl-L-homocysteine + H(+). It carries out the reaction precorrin-2 + NAD(+) = sirohydrochlorin + NADH + 2 H(+). The catalysed reaction is siroheme + 2 H(+) = sirohydrochlorin + Fe(2+). The protein operates within cofactor biosynthesis; adenosylcobalamin biosynthesis; precorrin-2 from uroporphyrinogen III: step 1/1. It participates in cofactor biosynthesis; adenosylcobalamin biosynthesis; sirohydrochlorin from precorrin-2: step 1/1. Its pathway is porphyrin-containing compound metabolism; siroheme biosynthesis; precorrin-2 from uroporphyrinogen III: step 1/1. It functions in the pathway porphyrin-containing compound metabolism; siroheme biosynthesis; siroheme from sirohydrochlorin: step 1/1. The protein operates within porphyrin-containing compound metabolism; siroheme biosynthesis; sirohydrochlorin from precorrin-2: step 1/1. Multifunctional enzyme that catalyzes the SAM-dependent methylations of uroporphyrinogen III at position C-2 and C-7 to form precorrin-2 via precorrin-1. Then it catalyzes the NAD-dependent ring dehydrogenation of precorrin-2 to yield sirohydrochlorin. Finally, it catalyzes the ferrochelation of sirohydrochlorin to yield siroheme. The polypeptide is Siroheme synthase (Pseudomonas syringae pv. syringae (strain B728a)).